Reading from the N-terminus, the 544-residue chain is Chaperonin GroEL (544 aa).

Residues 30-33 (TLGP), Lys-51, 87-91 (DGTTT), Gly-415, and Asp-495 contribute to the ATP site.

This sequence belongs to the chaperonin (HSP60) family. Forms a cylinder of 14 subunits composed of two heptameric rings stacked back-to-back. Interacts with the co-chaperonin GroES.

The protein resides in the cytoplasm. It catalyses the reaction ATP + H2O + a folded polypeptide = ADP + phosphate + an unfolded polypeptide.. In terms of biological role, together with its co-chaperonin GroES, plays an essential role in assisting protein folding. The GroEL-GroES system forms a nano-cage that allows encapsulation of the non-native substrate proteins and provides a physical environment optimized to promote and accelerate protein folding. This Neisseria meningitidis serogroup C (strain 053442) protein is Chaperonin GroEL.